We begin with the raw amino-acid sequence, 450 residues long: MNTKELWIEVKEILSRDESVSPEIYNYYISDTNLYTVSDNNCLITTKSEIAIGVFEAGLNEKIKNILKKLTGIQYNISFELEKNINKQASVISKIDTLTENNNLAYYENYTFENFVRGDSNHEAMQAALAVALDLGKKWNPLFIYGDSGLGKTHLLHAIENKVNEIYKTNNRVKYLKADEFGKIAMDILNQGHEIIEAFKTSYDIYDCLLIDDIQLLAKRNKTNELFFHIFNSYIEKNKQIVITSDKYPDDLGGFEARIISRFSYGLSIGLDSPDFETALKILEQKLKHQNNLGLFSEESLEFIALNFNSDVRKLEGAIKRLLFLAVMNKKPNEIITLADVEKAFKNAPLQNNEKITPKKIKQIVADSYNITIKAMMSKSRVSNVMQARQLAMYFCRTLLDEPFTRIGTEFGGKDHTTVMNSVKKVEAHISTNKEFKHLVNAIRRKIEGR.

The domain I, interacts with DnaA modulators stretch occupies residues 1–73 (MNTKELWIEV…KNILKKLTGI (73 aa)). The domain II stretch occupies residues 73-104 (IQYNISFELEKNINKQASVISKIDTLTENNNL). The tract at residues 105–326 (AYYENYTFEN…GAIKRLLFLA (222 aa)) is domain III, AAA+ region. Residues Gly-149, Gly-151, Lys-152, and Thr-153 each contribute to the ATP site. The tract at residues 327–450 (VMNKKPNEII…NAIRRKIEGR (124 aa)) is domain IV, binds dsDNA.

Belongs to the DnaA family. As to quaternary structure, oligomerizes as a right-handed, spiral filament on DNA at oriC.

It is found in the cytoplasm. In terms of biological role, plays an essential role in the initiation and regulation of chromosomal replication. ATP-DnaA binds to the origin of replication (oriC) to initiate formation of the DNA replication initiation complex once per cell cycle. Binds the DnaA box (a 9 base pair repeat at the origin) and separates the double-stranded (ds)DNA. Forms a right-handed helical filament on oriC DNA; dsDNA binds to the exterior of the filament while single-stranded (ss)DNA is stabiized in the filament's interior. The ATP-DnaA-oriC complex binds and stabilizes one strand of the AT-rich DNA unwinding element (DUE), permitting loading of DNA polymerase. After initiation quickly degrades to an ADP-DnaA complex that is not apt for DNA replication. Binds acidic phospholipids. The chain is Chromosomal replication initiator protein DnaA from Spiroplasma citri.